We begin with the raw amino-acid sequence, 1436 residues long: Inositol hexakisphosphate and diphosphoinositol-pentakisphosphate kinase 1 (1436 aa).

Residue 64–65 (KK) participates in substrate binding. ATP-binding positions include R145, K198, H205, R224, 248-251 (EEFM), and 257-259 (DVK). A substrate-binding site is contributed by 224–225 (RK). Positions 259 and 273 each coordinate substrate. Residues S275, D320, and 332–334 (DVN) each bind ATP. 337–340 (SFVK) contributes to the substrate binding site. The tract at residues 382-453 (PTTSGTMMEL…VLDITRLLLA (72 aa)) is polyphosphoinositide-binding domain. Residues 915-998 (GSAPAGCGFR…TSSSRPGGYR (84 aa)) form a disordered region. Phosphoserine is present on residues S939, S982, S1032, S1068, S1140, and S1147. Disordered regions lie at residues 1131 to 1191 (NHQA…GFSD) and 1389 to 1436 (SELS…EAIS). Over residues 1163–1181 (SSGPSSTVSSAGPSSPTTV) the composition is skewed to low complexity. The span at 1405–1436 (LSEETELQAQEVSEEIDQESEVVDELPPEAIS) shows a compositional bias: acidic residues.

The protein belongs to the histidine acid phosphatase family. VIP1 subfamily.

It localises to the cytoplasm. Its subcellular location is the cytosol. The protein resides in the cell membrane. It catalyses the reaction 1D-myo-inositol hexakisphosphate + ATP = 1-diphospho-1D-myo-inositol 2,3,4,5,6-pentakisphosphate + ADP. The catalysed reaction is 5-diphospho-1D-myo-inositol 1,2,3,4,6-pentakisphosphate + ATP + H(+) = 1,5-bis(diphospho)-1D-myo-inositol 2,3,4,6-tetrakisphosphate + ADP. Its function is as follows. Bifunctional inositol kinase that acts in concert with the IP6K kinases IP6K1, IP6K2 and IP6K3 to synthesize the diphosphate group-containing inositol pyrophosphates diphosphoinositol pentakisphosphate, PP-InsP5, and bis-diphosphoinositol tetrakisphosphate, (PP)2-InsP4. PP-InsP5 and (PP)2-InsP4, also respectively called InsP7 and InsP8, regulate a variety of cellular processes, including apoptosis, vesicle trafficking, cytoskeletal dynamics, exocytosis, insulin signaling and neutrophil activation. Phosphorylates inositol hexakisphosphate (InsP6) at position 1 to produce PP-InsP5 which is in turn phosphorylated by IP6Ks to produce (PP)2-InsP4. Alternatively, phosphorylates PP-InsP5 at position 1, produced by IP6Ks from InsP6, to produce (PP)2-InsP4. Activated when cells are exposed to hyperosmotic stress. This is Inositol hexakisphosphate and diphosphoinositol-pentakisphosphate kinase 1 from Mus musculus (Mouse).